The chain runs to 92 residues: uncharacterized protein (92 aa).

This is an uncharacterized protein from Bacillus subtilis (strain 168).